A 700-amino-acid polypeptide reads, in one-letter code: Methionine--tRNA ligase (700 aa).

Residues 14–24 (PYANGPVHLGH) carry the 'HIGH' region motif. Zn(2+) contacts are provided by Cys146, Cys149, Cys159, and Cys162. The short motif at 343 to 347 (KFSKS) is the 'KMSKS' region element. Lys346 is an ATP binding site. Positions 599-700 (EFEKIDLRVA…GDSIVGKPVK (102 aa)) constitute a tRNA-binding domain.

Belongs to the class-I aminoacyl-tRNA synthetase family. MetG type 1 subfamily. As to quaternary structure, homodimer. Requires Zn(2+) as cofactor.

The protein localises to the cytoplasm. The catalysed reaction is tRNA(Met) + L-methionine + ATP = L-methionyl-tRNA(Met) + AMP + diphosphate. Functionally, is required not only for elongation of protein synthesis but also for the initiation of all mRNA translation through initiator tRNA(fMet) aminoacylation. The chain is Methionine--tRNA ligase from Chloroherpeton thalassium (strain ATCC 35110 / GB-78).